A 614-amino-acid chain; its full sequence is Dihydroxy-acid dehydratase (614 aa).

Asp-81 is a Mg(2+) binding site. Cys-122 is a binding site for [2Fe-2S] cluster. Residues Asp-123 and Lys-124 each coordinate Mg(2+). Position 124 is an N6-carboxylysine (Lys-124). A [2Fe-2S] cluster-binding site is contributed by Cys-193. Glu-489 is a Mg(2+) binding site. The Proton acceptor role is filled by Ser-515.

This sequence belongs to the IlvD/Edd family. As to quaternary structure, homodimer. [2Fe-2S] cluster is required as a cofactor. Requires Mg(2+) as cofactor.

The catalysed reaction is (2R)-2,3-dihydroxy-3-methylbutanoate = 3-methyl-2-oxobutanoate + H2O. The enzyme catalyses (2R,3R)-2,3-dihydroxy-3-methylpentanoate = (S)-3-methyl-2-oxopentanoate + H2O. The protein operates within amino-acid biosynthesis; L-isoleucine biosynthesis; L-isoleucine from 2-oxobutanoate: step 3/4. Its pathway is amino-acid biosynthesis; L-valine biosynthesis; L-valine from pyruvate: step 3/4. In terms of biological role, functions in the biosynthesis of branched-chain amino acids. Catalyzes the dehydration of (2R,3R)-2,3-dihydroxy-3-methylpentanoate (2,3-dihydroxy-3-methylvalerate) into 2-oxo-3-methylpentanoate (2-oxo-3-methylvalerate) and of (2R)-2,3-dihydroxy-3-methylbutanoate (2,3-dihydroxyisovalerate) into 2-oxo-3-methylbutanoate (2-oxoisovalerate), the penultimate precursor to L-isoleucine and L-valine, respectively. This is Dihydroxy-acid dehydratase from Marinomonas sp. (strain MWYL1).